We begin with the raw amino-acid sequence, 562 residues long: Gut esterase 1 (562 aa).

The first 16 residues, 1-16 (MRIFLVSVILINACWA), serve as a signal peptide directing secretion. Asn-73 is a glycosylation site (N-linked (GlcNAc...) asparagine; atypical). Cys-75 and Cys-93 are disulfide-bonded. Catalysis depends on Ser-198, which acts as the Acyl-ester intermediate. The cysteines at positions 250 and 258 are disulfide-linked. Catalysis depends on charge relay system residues Glu-319 and His-452. The Prevents secretion from ER motif lies at 559–562 (KDEL).

Belongs to the type-B carboxylesterase/lipase family. In terms of tissue distribution, expressed only in the intestine.

The protein localises to the endoplasmic reticulum lumen. It carries out the reaction a carboxylic ester + H2O = an alcohol + a carboxylate + H(+). This Caenorhabditis elegans protein is Gut esterase 1 (ges-1).